The following is a 106-amino-acid chain: Immunoglobulin lambda constant 1 (106 aa).

The 95-residue stretch at P7–A101 folds into the Ig-like domain. An intrachain disulfide couples C28 to C87.

As to quaternary structure, immunoglobulins are composed of two identical heavy chains and two identical light chains; disulfide-linked.

Its subcellular location is the secreted. It localises to the cell membrane. In terms of biological role, constant region of immunoglobulin light chains. Immunoglobulins, also known as antibodies, are membrane-bound or secreted glycoproteins produced by B lymphocytes. In the recognition phase of humoral immunity, the membrane-bound immunoglobulins serve as receptors which, upon binding of a specific antigen, trigger the clonal expansion and differentiation of B lymphocytes into immunoglobulins-secreting plasma cells. Secreted immunoglobulins mediate the effector phase of humoral immunity, which results in the elimination of bound antigens. The antigen binding site is formed by the variable domain of one heavy chain, together with that of its associated light chain. Thus, each immunoglobulin has two antigen binding sites with remarkable affinity for a particular antigen. The variable domains are assembled by a process called V-(D)-J rearrangement and can then be subjected to somatic hypermutations which, after exposure to antigen and selection, allow affinity maturation for a particular antigen. This chain is Immunoglobulin lambda constant 1, found in Homo sapiens (Human).